Here is a 496-residue protein sequence, read N- to C-terminus: Probable malate:quinone oxidoreductase (496 aa).

Belongs to the MQO family. Requires FAD as cofactor.

It carries out the reaction (S)-malate + a quinone = a quinol + oxaloacetate. The protein operates within carbohydrate metabolism; tricarboxylic acid cycle; oxaloacetate from (S)-malate (quinone route): step 1/1. The protein is Probable malate:quinone oxidoreductase of Flavobacterium psychrophilum (strain ATCC 49511 / DSM 21280 / CIP 103535 / JIP02/86).